The following is a 721-amino-acid chain: MSPHQTTGQESDNMTVNGENAQASSQYIQSNEEMTSAIATEKKASTAKAAKDPSRPKRKKAKRACYACQRGHLTCGDERPCQRCIKRGFQDACHDGVRKKAKYLHDAPNEALMAGVGATLYNQRNAAQNNANGSNTSPGAPQQITSPNFYNTQQSPDYNGFPQNKTELQDSTVGPDNYASQSPVSPTYQISQGLSTQGLSPSLPQSTSETPSAANPAPGQFNSAFFDPSDPALFNFDLASMNFGNHYGALEFGMLGHMATGVGDTPPSESGAQRGSIGQNGSGTFGLTGSNFSESPSNQAPYLFSESGMNDWTQTAPVNRRSMYGSNANLVAGNMSDKPHAFAIESAPANFASPASNESPMMTTSSATFEDTTNSGAFNSRQNVPVSQQRQQPVVSTPQLKQQNLNLGSRRRHKNASSIYDSVKDPYSYTSGFHSLTAFIQRRFSPQKTLRIAKALASIRPSFIATTKTLNRDDLIFMEKCFQRTLWEYEDFINACGTPTIVCRRTGEIAAVGKEFSILTGWKKEVLLGKEPNHNVNTGGSSGLMTGSTSRGSYTPRPYSSEVYNSSATATPRTQPVFLAELLDDDSVIEFYEDFAKLAFGDSRGSVMTTCKLLKYKTKAESDILAGSNGEADAGLNGEAASNETNELNGSLTNGATTNGRGQRRWGKGEIAGEAGMNQLGFRDGKVECSYCWTVKRDVFDIPMLIVMNVSCLCLEPLSEP.

The span at 1–34 (MSPHQTTGQESDNMTVNGENAQASSQYIQSNEEM) shows a compositional bias: polar residues. The segment at 1-62 (MSPHQTTGQE…PSRPKRKKAK (62 aa)) is disordered. Basic and acidic residues predominate over residues 40–55 (TEKKASTAKAAKDPSR). The zn(2)-C6 fungal-type DNA-binding region spans 65 to 93 (CYACQRGHLTCGDERPCQRCIKRGFQDAC). Disordered regions lie at residues 128–224 (QNNA…FNSA), 263–300 (GDTP…SNQA), 353–400 (SPAS…TPQL), 533–567 (NHNV…YNSS), and 635–666 (GLNG…QRRW). Composition is skewed to polar residues over residues 133-213 (GSNT…TPSA), 267-277 (PSESGAQRGSI), 287-300 (LTGS…SNQA), and 361-379 (MMTT…GAFN). 2 stretches are compositionally biased toward low complexity: residues 380-399 (SRQN…STPQ) and 543-553 (GLMTGSTSRGS). A compositionally biased stretch (polar residues) spans 640–661 (AASNETNELNGSLTNGATTNGR).

It belongs to the ERT1/acuK family.

The protein localises to the nucleus. Functionally, transcription factor which regulates nonfermentable carbon utilization. Activator of gluconeogenetic genes. The chain is Transcription activator of gluconeogenesis ARB_05058 from Arthroderma benhamiae (strain ATCC MYA-4681 / CBS 112371) (Trichophyton mentagrophytes).